A 424-amino-acid polypeptide reads, in one-letter code: Protein-glutamate methylesterase/protein-glutamine glutaminase (424 aa).

Positions 6–123 constitute a Response regulatory domain; that stretch reads RVLVVDDSAF…SLDDFTRQLT (118 aa). Aspartate 57 carries the post-translational modification 4-aspartylphosphate. A disordered region spans residues 177–210; sequence SRLSPGRSPGGKEGVAGAVSAGSTRGEAIRPGKG. Positions 229 to 423 constitute a CheB-type methylesterase domain; it reads RRPGIEVVAI…PAIVALVTGA (195 aa). Residues serine 241, histidine 268, and aspartate 365 contribute to the active site.

It belongs to the CheB family. Post-translationally, phosphorylated by CheA. Phosphorylation of the N-terminal regulatory domain activates the methylesterase activity.

The protein localises to the cytoplasm. The catalysed reaction is [protein]-L-glutamate 5-O-methyl ester + H2O = L-glutamyl-[protein] + methanol + H(+). It carries out the reaction L-glutaminyl-[protein] + H2O = L-glutamyl-[protein] + NH4(+). Functionally, involved in chemotaxis. Part of a chemotaxis signal transduction system that modulates chemotaxis in response to various stimuli. Catalyzes the demethylation of specific methylglutamate residues introduced into the chemoreceptors (methyl-accepting chemotaxis proteins or MCP) by CheR. Also mediates the irreversible deamidation of specific glutamine residues to glutamic acid. This chain is Protein-glutamate methylesterase/protein-glutamine glutaminase, found in Moorella thermoacetica (strain ATCC 39073 / JCM 9320).